The following is a 168-amino-acid chain: Lipoprotein signal peptidase (168 aa).

The next 4 membrane-spanning stretches (helical) occupy residues 15–35 (WLWL…IVME), 47–67 (VLPF…SFLS), 75–95 (WLFT…MSKL), and 107–127 (AMII…GFVV). Active-site residues include D128 and D146. The chain crosses the membrane as a helical span at residues 141–161 (AFNLADTAICLGAAMIILDGF).

The protein belongs to the peptidase A8 family.

Its subcellular location is the cell inner membrane. The catalysed reaction is Release of signal peptides from bacterial membrane prolipoproteins. Hydrolyzes -Xaa-Yaa-Zaa-|-(S,diacylglyceryl)Cys-, in which Xaa is hydrophobic (preferably Leu), and Yaa (Ala or Ser) and Zaa (Gly or Ala) have small, neutral side chains.. The protein operates within protein modification; lipoprotein biosynthesis (signal peptide cleavage). Functionally, this protein specifically catalyzes the removal of signal peptides from prolipoproteins. The chain is Lipoprotein signal peptidase from Vibrio vulnificus (strain CMCP6).